Here is a 470-residue protein sequence, read N- to C-terminus: Solute carrier family 7 member 13 (470 aa).

Topologically, residues 1 to 11 (MDRGEKIQLKR) are cytoplasmic. The helical transmembrane segment at 12-32 (VFGYWWGTSFLLINIIGAGIF) threads the bilayer. Residues 33 to 45 (VSPKGVLAYSCMN) lie on the Extracellular side of the membrane. Residues 46-66 (VGVSLCVWAGCAILAMTSTLC) traverse the membrane as a helical segment. The Cytoplasmic portion of the chain corresponds to 67 to 87 (SAEISISFPCSGAQYYFLKRY). A helical transmembrane segment spans residues 88–108 (FGSTVAFLNLWTSLFLGSGVV). Residues 109–128 (AGQALLLAEYSIQPFFPSCS) are Extracellular-facing. The helical transmembrane segment at 129–149 (VPKLPKKCLALAMLWIVGILT) threads the bilayer. At 150 to 162 (SRGVKEVTWLQIA) the chain is on the cytoplasmic side. The chain crosses the membrane as a helical span at residues 163–183 (SSVLKVSILSFISLTGVVFLI). At 184–206 (RGKKENVERFQNAFDAELPDISH) the chain is on the extracellular side. A helical transmembrane segment spans residues 207-227 (LIQAIFQGYFAYSGGACFTLI). Topologically, residues 228 to 240 (AGELKKPRTTIPK) are cytoplasmic. The chain crosses the membrane as a helical span at residues 241 to 261 (CIFTALPLVTVVYLLVNISYL). The Extracellular segment spans residues 262-287 (TVLTPREILSSDAVAITWADRAFPSL). Residues 288–308 (AWIMPFAISTSLFSNLLISIF) traverse the membrane as a helical segment. Topologically, residues 309-336 (KSSRPIYLASQEGQLPLLFNTLNSHSSP) are cytoplasmic. The helical transmembrane segment at 337-357 (FTAVLLLVTLGSLAIILTSLI) threads the bilayer. Residue Asp358 is a topological domain, extracellular. A helical membrane pass occupies residues 359 to 379 (LINYIFFTGSLWSILLMIGIL). The Cytoplasmic segment spans residues 380–393 (RRRYQEPNLSIPYK). A helical membrane pass occupies residues 394–414 (VFLSFPLATIVIDVGLVVIPL). At 415 to 421 (VKSPNVH) the chain is on the extracellular side. Residues 422-442 (YVYVLLLVLSGLLFYIPLIHF) traverse the membrane as a helical segment. The Cytoplasmic segment spans residues 443–470 (KIRLAWFEKMTCYLQLLFNICLPDVSEE).

Belongs to the amino acid-polyamine-organocation (APC) superfamily. In terms of assembly, disulfide-linked heterodimer composed of the catalytic light subunit SLC7A13 and the heavy subunit SLC3A1. In terms of tissue distribution, expressed in the kidney.

It localises to the apical cell membrane. The catalysed reaction is L-cystine(out) + L-aspartate(in) = L-cystine(in) + L-aspartate(out). It carries out the reaction L-cystine(out) = L-cystine(in). The enzyme catalyses L-aspartate(in) + L-glutamate(out) = L-aspartate(out) + L-glutamate(in). It catalyses the reaction L-aspartate(in) + L-glutamine(out) = L-aspartate(out) + L-glutamine(in). The catalysed reaction is L-aspartate(in) + L-methionine(out) = L-aspartate(out) + L-methionine(in). It carries out the reaction L-leucine(out) + L-aspartate(in) = L-leucine(in) + L-aspartate(out). The enzyme catalyses L-valine(out) + L-aspartate(in) = L-valine(in) + L-aspartate(out). It catalyses the reaction L-aspartate(in) + L-phenylalanine(out) = L-aspartate(out) + L-phenylalanine(in). The catalysed reaction is L-tyrosine(out) + L-aspartate(in) = L-tyrosine(in) + L-aspartate(out). It carries out the reaction L-tryptophan(out) + L-aspartate(in) = L-tryptophan(in) + L-aspartate(out). Its function is as follows. Associates with SLC3A1/rBAT to form a functional heterodimeric complex that transports anionic and neutral amino acids across the apical plasma membrane of renal epithelium. Preferentially mediates exchange transport, but can also operate via facilitated diffusion. May act as a major transporter for L-cystine in late proximal tubules, ensuring its reabsorption from the luminal fluid in exchange for cytosolic L-glutamate or L-aspartate. This Homo sapiens (Human) protein is Solute carrier family 7 member 13 (SLC7A13).